The sequence spans 267 residues: Formamidopyrimidine-DNA glycosylase (267 aa).

Residue P2 is the Schiff-base intermediate with DNA of the active site. E3 acts as the Proton donor in catalysis. K58 acts as the Proton donor; for beta-elimination activity in catalysis. H91, R110, and R152 together coordinate DNA. The FPG-type zinc finger occupies 233 to 267; the sequence is DVYGRGHGTCTSCGGALEAVRLGNRSTVFCPRCQQ. The active-site Proton donor; for delta-elimination activity is the R257.

It belongs to the FPG family. In terms of assembly, monomer. It depends on Zn(2+) as a cofactor.

It carries out the reaction Hydrolysis of DNA containing ring-opened 7-methylguanine residues, releasing 2,6-diamino-4-hydroxy-5-(N-methyl)formamidopyrimidine.. It catalyses the reaction 2'-deoxyribonucleotide-(2'-deoxyribose 5'-phosphate)-2'-deoxyribonucleotide-DNA = a 3'-end 2'-deoxyribonucleotide-(2,3-dehydro-2,3-deoxyribose 5'-phosphate)-DNA + a 5'-end 5'-phospho-2'-deoxyribonucleoside-DNA + H(+). In terms of biological role, involved in base excision repair of DNA damaged by oxidation or by mutagenic agents. Acts as a DNA glycosylase that recognizes and removes damaged bases. Has a preference for oxidized purines, such as 7,8-dihydro-8-oxoguanine (8-oxoG). Has AP (apurinic/apyrimidinic) lyase activity and introduces nicks in the DNA strand. Cleaves the DNA backbone by beta-delta elimination to generate a single-strand break at the site of the removed base with both 3'- and 5'-phosphates. The polypeptide is Formamidopyrimidine-DNA glycosylase (Pelobacter propionicus (strain DSM 2379 / NBRC 103807 / OttBd1)).